The sequence spans 505 residues: Beta-glucosidase 3 (505 aa).

Residues 1–22 form the signal peptide; sequence MAAAAAFFCALLFISVQHGVLG. A beta-D-glucoside contacts are provided by Gln-43 and His-143. Residue Glu-189 is the Proton donor of the active site. A disulfide bridge links Cys-208 with Cys-217. Asn-221 is a glycosylation site (N-linked (GlcNAc...) asparagine). 2 residues coordinate a beta-D-glucoside: Tyr-333 and Glu-405. Glu-405 (nucleophile) is an active-site residue. Residues Asn-415 and Asn-436 are each glycosylated (N-linked (GlcNAc...) asparagine). A beta-D-glucoside-binding residues include Trp-450 and Tyr-466.

It belongs to the glycosyl hydrolase 1 family.

The enzyme catalyses Hydrolysis of terminal, non-reducing beta-D-glucosyl residues with release of beta-D-glucose.. In Oryza sativa subsp. japonica (Rice), this protein is Beta-glucosidase 3 (BGLU3).